A 100-amino-acid polypeptide reads, in one-letter code: Integration host factor subunit alpha (100 aa).

This sequence belongs to the bacterial histone-like protein family. In terms of assembly, heterodimer of an alpha and a beta chain.

In terms of biological role, this protein is one of the two subunits of integration host factor, a specific DNA-binding protein that functions in genetic recombination as well as in transcriptional and translational control. In Alcanivorax borkumensis (strain ATCC 700651 / DSM 11573 / NCIMB 13689 / SK2), this protein is Integration host factor subunit alpha.